Reading from the N-terminus, the 489-residue chain is Blue-light-activated histidine kinase (489 aa).

In terms of domain architecture, PAS spans 19–93 (ATDPFRAAVE…AIKSAIAAEK (75 aa)). Cys-69 carries the S-4a-FMN cysteine modification. PAC domains are found at residues 93-147 (KPID…ELEK) and 232-281 (YSIE…NKAL). The segment at 259–341 (NPLVLGIVQD…LLKENWAGAT (83 aa)) is HWE histidine kinase domain. Residue His-288 is modified to Phosphohistidine; by autocatalysis.

Post-translationally, FMN binds covalently to cysteine after exposure to blue light and this bond is spontaneously broken in the dark.

The enzyme catalyses ATP + protein L-histidine = ADP + protein N-phospho-L-histidine.. Functionally, photosensitive kinase that is involved in increased bacterial virulence upon exposure to light. Once ejected from an infected animal host, sunlight acts as an environmental signal that increases the virulence of the bacterium, preparing it for infection of the next host. This photoreceptor protein is directly related to the bacterium's survival and replication within host macrophages. The sequence is that of Blue-light-activated histidine kinase from Brucella ovis (strain ATCC 25840 / 63/290 / NCTC 10512).